A 274-amino-acid polypeptide reads, in one-letter code: Diaminopimelate epimerase (274 aa).

Residues asparagine 11, glutamine 44, and asparagine 64 each contribute to the substrate site. Cysteine 73 serves as the catalytic Proton donor. Substrate-binding positions include 74–75 (GN), asparagine 157, asparagine 190, and 208–209 (ER). Cysteine 217 (proton acceptor) is an active-site residue. 218–219 (GS) lines the substrate pocket.

This sequence belongs to the diaminopimelate epimerase family. In terms of assembly, homodimer.

The protein localises to the cytoplasm. It carries out the reaction (2S,6S)-2,6-diaminopimelate = meso-2,6-diaminopimelate. Its pathway is amino-acid biosynthesis; L-lysine biosynthesis via DAP pathway; DL-2,6-diaminopimelate from LL-2,6-diaminopimelate: step 1/1. Functionally, catalyzes the stereoinversion of LL-2,6-diaminopimelate (L,L-DAP) to meso-diaminopimelate (meso-DAP), a precursor of L-lysine and an essential component of the bacterial peptidoglycan. The protein is Diaminopimelate epimerase of Escherichia coli O81 (strain ED1a).